The sequence spans 386 residues: Enoyl-[acyl-carrier-protein] reductase 2, mitochondrial (386 aa).

The N-terminal 22 residues, 1–22 (MYSVLKQSIRPRLLATHNQFRT), are a transit peptide targeting the mitochondrion. Y79 (proton donor) is an active-site residue. Residues N172, 199-202 (TSAV), 222-224 (RDR), 296-299 (YGGM), 321-323 (FWV), and K381 each bind NADP(+).

Belongs to the zinc-containing alcohol dehydrogenase family. Quinone oxidoreductase subfamily. As to quaternary structure, homodimer and heterodimer with ETR1.

It is found in the mitochondrion. It catalyses the reaction a 2,3-saturated acyl-[ACP] + NADP(+) = a (2E)-enoyl-[ACP] + NADPH + H(+). In terms of biological role, required for respiration and the maintenance of the mitochondrial compartment. Oxidoreductase with a preference for short and medium chain substrates, including trans-2-hexenoyl-CoA (C6), trans-2-decenoyl-CoA (C10), and trans-2-hexadecenoyl-CoA (C16). May play a role in mitochondrial fatty acid synthesis. The sequence is that of Enoyl-[acyl-carrier-protein] reductase 2, mitochondrial (ETR2) from Candida tropicalis (Yeast).